The primary structure comprises 410 residues: Phospho-N-acetylmuramoyl-pentapeptide-transferase (410 aa).

10 helical membrane passes run 27–47 (RMILAAITSLLLSIFLGPYFI), 77–97 (TPTMGGILILSSMLVSLVLWM), 99–119 (LTHIFTLILFVTTVFLGLIGG), 140–160 (LFFQFVLSAAIASYFLLSSVN), 213–233 (PVVTFGGISLILMAFFIFFVI), 248–268 (GLLAGCLVTAAGSLCLIAFVS), 288–308 (IAIYLCALIGASLGFLWYNGY), 312–332 (VFMGDTGSLTLGGILGVSAVL), 337–357 (FLLGIVGGIFVAEALSVILQV), and 389–409 (VIRFWIMSLLFAIIGIASLKF).

This sequence belongs to the glycosyltransferase 4 family. MraY subfamily. It depends on Mg(2+) as a cofactor.

Its subcellular location is the cell inner membrane. It catalyses the reaction UDP-N-acetyl-alpha-D-muramoyl-L-alanyl-gamma-D-glutamyl-meso-2,6-diaminopimeloyl-D-alanyl-D-alanine + di-trans,octa-cis-undecaprenyl phosphate = di-trans,octa-cis-undecaprenyl diphospho-N-acetyl-alpha-D-muramoyl-L-alanyl-D-glutamyl-meso-2,6-diaminopimeloyl-D-alanyl-D-alanine + UMP. It participates in cell wall biogenesis; peptidoglycan biosynthesis. In terms of biological role, catalyzes the initial step of the lipid cycle reactions in the biosynthesis of the cell wall peptidoglycan: transfers peptidoglycan precursor phospho-MurNAc-pentapeptide from UDP-MurNAc-pentapeptide onto the lipid carrier undecaprenyl phosphate, yielding undecaprenyl-pyrophosphoryl-MurNAc-pentapeptide, known as lipid I. The protein is Phospho-N-acetylmuramoyl-pentapeptide-transferase of Protochlamydia amoebophila (strain UWE25).